A 243-amino-acid chain; its full sequence is Adenosine 5'-phosphosulfate reductase (243 aa).

[4Fe-4S] cluster-binding residues include Cys126, Cys127, Cys209, and Cys212. Cys235 acts as the Nucleophile; cysteine thiosulfonate intermediate in catalysis.

The protein belongs to the PAPS reductase family. CysH subfamily. Requires [4Fe-4S] cluster as cofactor.

The protein localises to the cytoplasm. The catalysed reaction is [thioredoxin]-disulfide + sulfite + AMP + 2 H(+) = adenosine 5'-phosphosulfate + [thioredoxin]-dithiol. Its pathway is sulfur metabolism; hydrogen sulfide biosynthesis; sulfite from sulfate. In terms of biological role, catalyzes the formation of sulfite from adenosine 5'-phosphosulfate (APS) using thioredoxin as an electron donor. In Staphylococcus epidermidis (strain ATCC 12228 / FDA PCI 1200), this protein is Adenosine 5'-phosphosulfate reductase.